The following is a 462-amino-acid chain: Cysteine--tRNA ligase (462 aa).

Residue Cys24 coordinates Zn(2+). The short motif at 26 to 36 is the 'HIGH' region element; it reads PTVYDDAHLGH. The Zn(2+) site is built by Cys199, His224, and Glu228. Residues 256–260 carry the 'KMSKS' region motif; it reads KMSKS. Lys259 is a binding site for ATP.

Belongs to the class-I aminoacyl-tRNA synthetase family. Monomer. Zn(2+) serves as cofactor.

Its subcellular location is the cytoplasm. It catalyses the reaction tRNA(Cys) + L-cysteine + ATP = L-cysteinyl-tRNA(Cys) + AMP + diphosphate. The chain is Cysteine--tRNA ligase (cysS) from Campylobacter jejuni subsp. jejuni serotype O:2 (strain ATCC 700819 / NCTC 11168).